We begin with the raw amino-acid sequence, 237 residues long: Golgi anti-apoptotic protein (237 aa).

Residues 1 to 37 (MAMPSLSACSSIEDDFNYGSSVASASVHIRMAFLRKV) lie on the Cytoplasmic side of the membrane. A helical membrane pass occupies residues 38–58 (YGILCLQFLLTTATTAVFLYF). Residues 59–67 (DCMRTFIQG) are Lumenal-facing. A helical transmembrane segment spans residues 68 to 88 (SPVLILASMFGSIGLIFALTL). The Cytoplasmic segment spans residues 89–94 (HRHKHP). Residues 95 to 115 (LNLYLLCGFTLSESLTLASVV) traverse the membrane as a helical segment. A topological domain (lumenal) is located at residue Thr-116. Residues 117–137 (FYDVHVVMQAFMLTTAAFLAL) form a helical membrane-spanning segment. Over 138-151 (TTYTLQSKRDFSKL) the chain is Cytoplasmic. The helical transmembrane segment at 152-172 (GAGLFAALWILILSGLLGIFV) threads the bilayer. Residues 173 to 174 (QN) are Lumenal-facing. Residues 175 to 195 (ETVKLVLSAFGALVFCGFIIY) form a helical membrane-spanning segment. Topologically, residues 196 to 209 (DTHSLIHKLSPEEY) are cytoplasmic. Positions 210–230 (VLASINLYLDIINLFLHLLQL) form an intramembrane region, helical. At 231-237 (LEVSNKK) the chain is on the cytoplasmic side.

Belongs to the BI1 family. LFG subfamily.

The protein localises to the host Golgi apparatus membrane. Its function is as follows. May affect virulence through inhibition of apoptosis. The sequence is that of Golgi anti-apoptotic protein (L6) from Vaccinia virus (strain LC16m0) (VACV).